The primary structure comprises 608 residues: Dolichyl-diphosphooligosaccharide--protein glycosyltransferase subunit 1 (608 aa).

Residues 1-24 form the signal peptide; it reads MEAPAVCLLPLLLLLWAWAPAPGR. The Lumenal portion of the chain corresponds to 25 to 435; the sequence is ASPEALPLVN…VVHYTFNKVL (411 aa). An N6-acetyllysine modification is found at Lys-188. An N-linked (GlcNAc...) asparagine glycan is attached at Asn-300. Residues 436–456 form a helical membrane-spanning segment; the sequence is MLQEPLLVVAAFYILFFTVIV. Residues 457-607 lie on the Cytoplasmic side of the membrane; it reads YVRLDFSITK…VTKIDHILDA (151 aa). Position 539 is an N6-acetyllysine; alternate (Lys-539). Residue Lys-539 forms a Glycyl lysine isopeptide (Lys-Gly) (interchain with G-Cter in SUMO2); alternate linkage.

The protein belongs to the OST1 family. Component of the oligosaccharyltransferase (OST) complex. OST exists in two different complex forms which contain common core subunits RPN1, RPN2, OST48, OST4, DAD1 and TMEM258, either STT3A or STT3B as catalytic subunits, and form-specific accessory subunits. STT3A complex assembly occurs through the formation of 3 subcomplexes. Subcomplex 1 contains RPN1 and TMEM258, subcomplex 2 contains the STT3A-specific subunits STT3A, DC2/OSTC, and KCP2 as well as the core subunit OST4, and subcomplex 3 contains RPN2, DAD1, and OST48. The STT3A complex can form stable complexes with the Sec61 complex or with both the Sec61 and TRAP complexes. Interacts with TMEM35A/NACHO. Ubiquitinated by the ECS(ASB11) complex. In terms of processing, ufmylated by UFL1 in response to endoplasmic reticulum stress, promoting reticulophagy of endoplasmic reticulum sheets. Detected in liver (at protein level).

The protein localises to the endoplasmic reticulum membrane. It functions in the pathway protein modification; protein glycosylation. Its function is as follows. Subunit of the oligosaccharyl transferase (OST) complex that catalyzes the initial transfer of a defined glycan (Glc(3)Man(9)GlcNAc(2) in eukaryotes) from the lipid carrier dolichol-pyrophosphate to an asparagine residue within an Asn-X-Ser/Thr consensus motif in nascent polypeptide chains, the first step in protein N-glycosylation. N-glycosylation occurs cotranslationally and the complex associates with the Sec61 complex at the channel-forming translocon complex that mediates protein translocation across the endoplasmic reticulum (ER). All subunits are required for a maximal enzyme activity. This is Dolichyl-diphosphooligosaccharide--protein glycosyltransferase subunit 1 from Sus scrofa (Pig).